We begin with the raw amino-acid sequence, 152 residues long: Methylglyoxal synthase (152 aa).

An MGS-like domain is found at 6-152 (RKISARKSIA…YDGYLAERLA (147 aa)). Substrate contacts are provided by residues histidine 19, lysine 23, 45 to 48 (TGTT), and 65 to 66 (SG). Aspartate 71 (proton donor/acceptor) is an active-site residue. Position 98 (histidine 98) interacts with substrate.

Belongs to the methylglyoxal synthase family.

The catalysed reaction is dihydroxyacetone phosphate = methylglyoxal + phosphate. Its function is as follows. Catalyzes the formation of methylglyoxal from dihydroxyacetone phosphate. This is Methylglyoxal synthase from Actinobacillus pleuropneumoniae serotype 3 (strain JL03).